A 785-amino-acid chain; its full sequence is SUN domain-containing protein 1 (785 aa).

The segment at 1–138 is LMNA-binding; it reads MDFSRLHMYS…TRRPPVLDES (138 aa). Residues 1–288 lie on the Nuclear side of the membrane; that stretch reads MDFSRLHMYS…VFLLTRCLRN (288 aa). Phosphoserine is present on residues Ser-48, Ser-100, and Ser-138. Lys-195 is covalently cross-linked (Glycyl lysine isopeptide (Lys-Gly) (interchain with G-Cter in SUMO2)). The segment at 209 to 309 is SYNE2-binding; sequence SRVYSRDRNQ…FLLLAGLSLR (101 aa). The interval 223-309 is EMD-binding; sequence LLQILRRIGA…FLLLAGLSLR (87 aa). A helical membrane pass occupies residues 289–308; it reads ICKFLVLLIPLFLLLAGLSL. The Perinuclear space portion of the chain corresponds to 309–785; sequence RGQGNFFSFL…RFRVHGEPVK (477 aa). A phosphoserine mark is found at Asp-333 and Ser-344. The stretch at 428–495 forms a coiled coil; sequence HQEHEVRMSH…KSELSSWRHV (68 aa). A sufficient for interaction with SYNE1 and SYNE2 region spans residues 574-785; the sequence is TSEAVVSAVS…RFRVHGEPVK (212 aa). One can recognise an SUN domain in the interval 622-784; the sequence is GGSILSTRCS…YRFRVHGEPV (163 aa).

As to quaternary structure, core component of the LINC complex which is composed of inner nuclear membrane SUN domain-containing proteins coupled to outer nuclear membrane KASH domain-containing nesprins. SUN and KASH domain-containing proteins seem to bind each other promiscuously; however, differentially expression of LINC complex constituents is giving rise to specific assemblies. At least SUN1/2-containing core LINC complexes are proposed to be hexameric composed of three protomers of each KASH and SUN domain-containing protein. Interacts with KASH5 (via the last 22 amino acids); this interaction mediates KASH5 telomere localization by forming a SUN1:KASH5 LINC complex. May interact with SYNE3. Interacts with SYNE2 and SYNE1; probably forming respective LINC complexes. Interacts with A-type lamin with a strong preference for unprocessed A-type lamin compared with the mature protein. Interaction with lamins B1 and C is hardly detectable. Interacts with NAT10. Interacts with EMD and TSNAX. Associates with the nuclear pore complex (NPC). Interacts with CCDC79/TERB1; promoting the accumulation of the LINC complex complexes at the telomere-nuclear envelope attachment sites. Interacts (via KASH domain) with TMEM258. In terms of processing, the disulfide bond with KASH domain-containing nesprins is required for stability of the respective LINC complexes under tensile forces.

Its subcellular location is the nucleus inner membrane. Its function is as follows. As a component of the LINC (LInker of Nucleoskeleton and Cytoskeleton) complex involved in the connection between the nuclear lamina and the cytoskeleton. The nucleocytoplasmic interactions established by the LINC complex play an important role in the transmission of mechanical forces across the nuclear envelope and in nuclear movement and positioning. Required for interkinetic nuclear migration (INM) and essential for nucleokinesis and centrosome-nucleus coupling during radial neuronal migration in the cerebral cortex and during glial migration. Involved in telomere attachment to nuclear envelope in the prophase of meiosis implicating a SUN1/2:KASH5 LINC complex in which SUN1 and SUN2 seem to act at least partial redundantly. Required for gametogenesis and involved in selective gene expression of coding and non-coding RNAs needed for gametogenesis. Helps to define the distribution of nuclear pore complexes (NPCs). Required for efficient localization of SYNE4 in the nuclear envelope. May be involved in nuclear remodeling during sperm head formation in spermatogenesis. May play a role in DNA repair by suppressing non-homologous end joining repair to facilitate the repair of DNA cross-links. The chain is SUN domain-containing protein 1 from Homo sapiens (Human).